Consider the following 589-residue polypeptide: UvrABC system protein C (589 aa).

The GIY-YIG domain occupies 10 to 87; the sequence is ESSGVYLMKK…IKKYSPKYNI (78 aa). The UVR domain occupies 197-232; that stretch reads SKLINELTALMNKASQDMDFEKSIIYREQIKELKSI.

This sequence belongs to the UvrC family. Interacts with UvrB in an incision complex.

It localises to the cytoplasm. Its function is as follows. The UvrABC repair system catalyzes the recognition and processing of DNA lesions. UvrC both incises the 5' and 3' sides of the lesion. The N-terminal half is responsible for the 3' incision and the C-terminal half is responsible for the 5' incision. This chain is UvrABC system protein C, found in Fusobacterium nucleatum subsp. nucleatum (strain ATCC 25586 / DSM 15643 / BCRC 10681 / CIP 101130 / JCM 8532 / KCTC 2640 / LMG 13131 / VPI 4355).